A 258-amino-acid chain; its full sequence is Global transcriptional regulator CodY (258 aa).

The interval Met-1–Leu-156 is GAF domain. A DNA-binding region (H-T-H motif) is located at residues Ala-204 to Arg-223.

It belongs to the CodY family.

It is found in the cytoplasm. DNA-binding global transcriptional regulator which is involved in the adaptive response to starvation and acts by directly or indirectly controlling the expression of numerous genes in response to nutrient availability. During rapid exponential growth, CodY is highly active and represses genes whose products allow adaptation to nutrient depletion. This Clostridium acetobutylicum (strain ATCC 824 / DSM 792 / JCM 1419 / IAM 19013 / LMG 5710 / NBRC 13948 / NRRL B-527 / VKM B-1787 / 2291 / W) protein is Global transcriptional regulator CodY.